The following is a 306-amino-acid chain: Acetyl-coenzyme A carboxylase carboxyl transferase subunit beta (306 aa).

The CoA carboxyltransferase N-terminal domain occupies 25 to 294 (LWIKDPTSGE…VVNPSNTSST (270 aa)). A compositionally biased stretch (low complexity) spans 287–296 (NPSNTSSTNS). The disordered stretch occupies residues 287-306 (NPSNTSSTNSQASLSKAEAA).

It belongs to the AccD/PCCB family. In terms of assembly, acetyl-CoA carboxylase is a heterohexamer composed of biotin carboxyl carrier protein (AccB), biotin carboxylase (AccC) and two subunits each of ACCase subunit alpha (AccA) and ACCase subunit beta (AccD).

It localises to the cytoplasm. The enzyme catalyses N(6)-carboxybiotinyl-L-lysyl-[protein] + acetyl-CoA = N(6)-biotinyl-L-lysyl-[protein] + malonyl-CoA. The protein operates within lipid metabolism; malonyl-CoA biosynthesis; malonyl-CoA from acetyl-CoA: step 1/1. Component of the acetyl coenzyme A carboxylase (ACC) complex. Biotin carboxylase (BC) catalyzes the carboxylation of biotin on its carrier protein (BCCP) and then the CO(2) group is transferred by the transcarboxylase to acetyl-CoA to form malonyl-CoA. This Bartonella henselae (strain ATCC 49882 / DSM 28221 / CCUG 30454 / Houston 1) (Rochalimaea henselae) protein is Acetyl-coenzyme A carboxylase carboxyl transferase subunit beta.